Here is a 401-residue protein sequence, read N- to C-terminus: Imidazolonepropionase (401 aa).

Fe(3+) is bound by residues His66 and His68. His66 and His68 together coordinate Zn(2+). 4-imidazolone-5-propanoate-binding residues include Arg75, Tyr138, and His171. Position 138 (Tyr138) interacts with N-formimidoyl-L-glutamate. Residue His236 participates in Fe(3+) binding. His236 contacts Zn(2+). Gln239 lines the 4-imidazolone-5-propanoate pocket. A Fe(3+)-binding site is contributed by Asp311. Zn(2+) is bound at residue Asp311. Residues Asn313 and Gly315 each contribute to the N-formimidoyl-L-glutamate site. Thr316 is a binding site for 4-imidazolone-5-propanoate.

Belongs to the metallo-dependent hydrolases superfamily. HutI family. Zn(2+) is required as a cofactor. It depends on Fe(3+) as a cofactor.

The protein resides in the cytoplasm. It carries out the reaction 4-imidazolone-5-propanoate + H2O = N-formimidoyl-L-glutamate. It participates in amino-acid degradation; L-histidine degradation into L-glutamate; N-formimidoyl-L-glutamate from L-histidine: step 3/3. Catalyzes the hydrolytic cleavage of the carbon-nitrogen bond in imidazolone-5-propanoate to yield N-formimidoyl-L-glutamate. It is the third step in the universal histidine degradation pathway. This is Imidazolonepropionase from Pseudomonas putida (Arthrobacter siderocapsulatus).